The primary structure comprises 87 residues: Small ribosomal subunit protein bS20 (87 aa).

The segment at 1–27 (MANIKSAKKRAVTSEKRRKHNASRRSM) is disordered.

It belongs to the bacterial ribosomal protein bS20 family.

Binds directly to 16S ribosomal RNA. In Erwinia tasmaniensis (strain DSM 17950 / CFBP 7177 / CIP 109463 / NCPPB 4357 / Et1/99), this protein is Small ribosomal subunit protein bS20.